Consider the following 254-residue polypeptide: Probable 2,4-dienoyl-CoA reductase [(2E)-enoyl-CoA-producing] (254 aa).

Position 6-38 (6-38 (VIITGGSSGMGKAMAKKQAELGWHVMVTGRNHE)) interacts with NADP(+). Residue Thr-100 coordinates substrate. The active-site Proton acceptor is the Tyr-142. Residue Lys-157 participates in NAD(+) binding.

Belongs to the short-chain dehydrogenases/reductases (SDR) family. 2,4-dienoyl-CoA reductase subfamily.

The enzyme catalyses a 4,5-saturated-(2E)-enoyl-CoA + NADP(+) = a (2E,4E)-dienoyl-CoA + NADPH + H(+). The catalysed reaction is a (2E,4Z)-dienoyl-CoA + NADPH + H(+) = a 4,5-saturated-(2E)-enoyl-CoA + NADP(+). It participates in lipid metabolism; fatty acid beta-oxidation. In terms of biological role, auxiliary enzyme of beta-oxidation. It participates in the metabolism of unsaturated fatty enoyl-CoA esters having double bonds in both even- and odd-numbered positions. Catalyzes the NADP-dependent reduction of 2,4-dienoyl-CoA to yield trans-3-enoyl-CoA. The sequence is that of Probable 2,4-dienoyl-CoA reductase [(2E)-enoyl-CoA-producing] (fadH) from Bacillus subtilis (strain 168).